Here is a 133-residue protein sequence, read N- to C-terminus: Small ribosomal subunit protein uS11 (133 aa).

The disordered stretch occupies residues 1–22 (MPPKTRGAVRKPRKKDKKNIAL). The span at 7 to 17 (GAVRKPRKKDK) shows a compositional bias: basic residues.

It belongs to the universal ribosomal protein uS11 family. In terms of assembly, part of the 30S ribosomal subunit. Interacts with proteins S7 and S18. Binds to IF-3.

Functionally, located on the platform of the 30S subunit, it bridges several disparate RNA helices of the 16S rRNA. Forms part of the Shine-Dalgarno cleft in the 70S ribosome. The protein is Small ribosomal subunit protein uS11 of Renibacterium salmoninarum (strain ATCC 33209 / DSM 20767 / JCM 11484 / NBRC 15589 / NCIMB 2235).